The sequence spans 157 residues: Protein-export protein SecB (157 aa).

The protein belongs to the SecB family. As to quaternary structure, homotetramer, a dimer of dimers. One homotetramer interacts with 1 SecA dimer.

The protein localises to the cytoplasm. One of the proteins required for the normal export of preproteins out of the cell cytoplasm. It is a molecular chaperone that binds to a subset of precursor proteins, maintaining them in a translocation-competent state. It also specifically binds to its receptor SecA. The protein is Protein-export protein SecB of Rhodopseudomonas palustris (strain TIE-1).